A 1305-amino-acid polypeptide reads, in one-letter code: Adenylate cyclase type 9 (1305 aa).

At 1-110 (MASPVNQQLL…CFPQTQRRFR (110 aa)) the chain is on the cytoplasmic side. Low complexity predominate over residues 46–55 (ISSSCSSGES). Residues 46–71 (ISSSCSSGESGVKKTGGSGGARRQKK) form a disordered region. Residues 111-131 (YALMYLSVAGLLWSIYFSVHM) traverse the membrane as a helical segment. Topologically, residues 132 to 134 (KTK) are extracellular. The helical transmembrane segment at 135–155 (LVSHLVPTLCFLIVCLGFFFF) threads the bilayer. The Cytoplasmic portion of the chain corresponds to 156–164 (TFTKSYARH). Residues 165 to 185 (CTAISLLVTLLVFTLTLASQF) form a helical membrane-spanning segment. At 186–209 (QVLNPGLGSDSLSNLTSFSATGSS) the chain is on the extracellular side. N-linked (GlcNAc...) asparagine glycosylation is present at Asn199. The chain crosses the membrane as a helical span at residues 210-229 (SCLSQVGSFSICVEVLLLLY). The Cytoplasmic portion of the chain corresponds to 230–235 (TVMHLP). The helical transmembrane segment at 236–253 (LYLSACLGVAYSILFETF) threads the bilayer. The Extracellular segment spans residues 254–274 (GYHFRDESCFVLLVGRMAHWE). Residues 275-295 (LLSKALLHVCIHAIGVHLFIM) traverse the membrane as a helical segment. The Cytoplasmic segment spans residues 296–778 (SEVRSRSTFL…VKTFASATFS (483 aa)). The segment at 343-369 (QGDDESENSVKRHSASSPKSRKKKSSI) is disordered. The segment covering 353 to 368 (KRHSASSPKSRKKKSS) has biased composition (basic residues). Mg(2+)-binding residues include Asp393, Ile394, and Asp437. ATP-binding positions include 393–398 (DIVGFT), 435–437 (LGD), and Arg481. Composition is skewed to polar residues over residues 607–618 (SDSHTNCTQPET) and 670–680 (ESSTGDTLTNS). Residues 607–680 (SDSHTNCTQP…SSTGDTLTNS (74 aa)) are disordered. Residues 779-799 (SLQDVLLNYFIFVLLSVACLL) traverse the membrane as a helical segment. Topologically, residues 800-810 (KPGTNTVSPPT) are extracellular. The chain crosses the membrane as a helical span at residues 811 to 831 (LALVLLSVCGLLGFLSLLVSV). Residues 832–859 (RMAFYLEDMLLCTRRLLEIISGWVPRHF) lie on the Cytoplasmic side of the membrane. Residues 860–880 (IGTVLVCLPAAVIFSYLSSDF) traverse the membrane as a helical segment. The Extracellular segment spans residues 881–883 (YTD). A helical transmembrane segment spans residues 884 to 904 (IHYTMFLCSALLIPMVQYCNF). Residues 905–911 (CQLSSSA) are Cytoplasmic-facing. A helical transmembrane segment spans residues 912–932 (LLLATITGATMLILIYLPLCP). Over 933 to 966 (QRPPLDPGTDIEANLSTSNSSYETLDNPRTELPF) the chain is Extracellular. 2 N-linked (GlcNAc...) asparagine glycosylation sites follow: Asn946 and Asn951. The helical transmembrane segment at 967–987 (TRLGQEIAVAYFLLLLLVWFL) threads the bilayer. Over 988 to 1305 (NREFDVSYRL…EERGRDGGAR (318 aa)) the chain is Cytoplasmic. Residues Lys1099, 1176-1178 (DIW), 1183-1187 (NIASR), and Lys1223 contribute to the ATP site. A disordered region spans residues 1261–1305 (SIGRSPTDEISSLVTGGKGAVELGSGEAERKREKAEERGRDGGAR). The segment covering 1287–1305 (EAERKREKAEERGRDGGAR) has biased composition (basic and acidic residues).

The protein belongs to the adenylyl cyclase class-4/guanylyl cyclase family. Mg(2+) is required as a cofactor. It depends on Mn(2+) as a cofactor. In terms of tissue distribution, detected in oocytes.

The protein resides in the cell membrane. The catalysed reaction is ATP = 3',5'-cyclic AMP + diphosphate. Its function is as follows. Adenylyl cyclase that catalyzes the formation of the signaling molecule cAMP in response to activation of G protein-coupled receptors. This Xenopus laevis (African clawed frog) protein is Adenylate cyclase type 9 (adcy9).